We begin with the raw amino-acid sequence, 436 residues long: NADH-quinone oxidoreductase subunit D 1 (436 aa).

The protein belongs to the complex I 49 kDa subunit family. As to quaternary structure, NDH-1 is composed of 14 different subunits. Subunits NuoB, C, D, E, F, and G constitute the peripheral sector of the complex.

The protein resides in the cell inner membrane. The catalysed reaction is a quinone + NADH + 5 H(+)(in) = a quinol + NAD(+) + 4 H(+)(out). NDH-1 shuttles electrons from NADH, via FMN and iron-sulfur (Fe-S) centers, to quinones in the respiratory chain. The immediate electron acceptor for the enzyme in this species is believed to be ubiquinone. Couples the redox reaction to proton translocation (for every two electrons transferred, four hydrogen ions are translocated across the cytoplasmic membrane), and thus conserves the redox energy in a proton gradient. The sequence is that of NADH-quinone oxidoreductase subunit D 1 from Stenotrophomonas maltophilia (strain R551-3).